A 671-amino-acid chain; its full sequence is Polyadenylate-binding protein 8 (671 aa).

4 RRM domains span residues 45–123 (TSLY…YSVR), 133–210 (GNIF…PFVH), 224–301 (TNVY…KAQK), and 327–404 (SNLY…LAQR). The disordered stretch occupies residues 467–526 (LVPGMRPGGSPMPNFFMPMMQQGQQQQQQQQQQQRPGGGRRGALPQPQQPSPMMQQQMHP). Composition is skewed to low complexity over residues 483–501 (MPMMQQGQQQQQQQQQQQR) and 508–525 (GALPQPQQPSPMMQQQMH). The region spanning 573-650 (PIVALATRLA…AMDVLRSVAQ (78 aa)) is the PABC domain.

It belongs to the polyadenylate-binding protein type-1 family. As to quaternary structure, interacts with ERD15/CID1. Interacts with Turnip mosaic virus (TuMV) VPg-Pro and RNA-dependent RNA polymerase (RdRp). As to expression, expressed predominantly in immature flowers.

The protein resides in the cytoplasm. It is found in the nucleus. In terms of biological role, binds the poly(A) tail of mRNA. Appears to be an important mediator of the multiple roles of the poly(A) tail in mRNA biogenesis, stability and translation. During infection with potyvirus TuMV, acts as a potential integral component of the viral replicase complex that could play an important role in the regulation of potyviral RNA-dependent RNA polymerase (RdRp). This Arabidopsis thaliana (Mouse-ear cress) protein is Polyadenylate-binding protein 8 (PAB8).